The primary structure comprises 520 residues: Bifunctional purine biosynthesis protein PurH (520 aa).

Positions 1–146 (MAPVALLSVS…KNHADVAVLT (146 aa)) constitute an MGS-like domain.

The protein belongs to the PurH family.

It carries out the reaction (6R)-10-formyltetrahydrofolate + 5-amino-1-(5-phospho-beta-D-ribosyl)imidazole-4-carboxamide = 5-formamido-1-(5-phospho-D-ribosyl)imidazole-4-carboxamide + (6S)-5,6,7,8-tetrahydrofolate. The enzyme catalyses IMP + H2O = 5-formamido-1-(5-phospho-D-ribosyl)imidazole-4-carboxamide. It functions in the pathway purine metabolism; IMP biosynthesis via de novo pathway; 5-formamido-1-(5-phospho-D-ribosyl)imidazole-4-carboxamide from 5-amino-1-(5-phospho-D-ribosyl)imidazole-4-carboxamide (10-formyl THF route): step 1/1. Its pathway is purine metabolism; IMP biosynthesis via de novo pathway; IMP from 5-formamido-1-(5-phospho-D-ribosyl)imidazole-4-carboxamide: step 1/1. The protein is Bifunctional purine biosynthesis protein PurH of Synechococcus sp. (strain CC9605).